Here is a 179-residue protein sequence, read N- to C-terminus: MARLVFRKNGKVIENPEEIKSFLSQYGVVYDVWGVDRLPEDVRKNYDIDEENSKAIIQAYEKELKELKEKMGYITEDIVVLSEKTPNLDGLMAKFKREHHHIDDEVRFVVDGSGIFPVKIEDDIVDIHVEAGELIVVPAGARHWFELDENRKIKCIRVFKTPAGWEAIYNENETATMRD.

H99, H101, E105, and H143 together coordinate Fe(2+). The Ni(2+) site is built by H99, H101, E105, and H143.

The protein belongs to the acireductone dioxygenase (ARD) family. In terms of assembly, monomer. Fe(2+) serves as cofactor. Requires Ni(2+) as cofactor.

The catalysed reaction is 1,2-dihydroxy-5-(methylsulfanyl)pent-1-en-3-one + O2 = 3-(methylsulfanyl)propanoate + CO + formate + 2 H(+). The enzyme catalyses 1,2-dihydroxy-5-(methylsulfanyl)pent-1-en-3-one + O2 = 4-methylsulfanyl-2-oxobutanoate + formate + 2 H(+). Its pathway is amino-acid biosynthesis; L-methionine biosynthesis via salvage pathway; L-methionine from S-methyl-5-thio-alpha-D-ribose 1-phosphate: step 5/6. Functionally, catalyzes 2 different reactions between oxygen and the acireductone 1,2-dihydroxy-3-keto-5-methylthiopentene (DHK-MTPene) depending upon the metal bound in the active site. Fe-containing acireductone dioxygenase (Fe-ARD) produces formate and 2-keto-4-methylthiobutyrate (KMTB), the alpha-ketoacid precursor of methionine in the methionine recycle pathway. Ni-containing acireductone dioxygenase (Ni-ARD) produces methylthiopropionate, carbon monoxide and formate, and does not lie on the methionine recycle pathway. The polypeptide is Acireductone dioxygenase (Sulfurihydrogenibium sp. (strain YO3AOP1)).